We begin with the raw amino-acid sequence, 396 residues long: L-lactate dehydrogenase (396 aa).

The region spanning 1 to 380 (MIISAASDYR…SGDSLVQELG (380 aa)) is the FMN hydroxy acid dehydrogenase domain. A substrate-binding site is contributed by Tyr-24. FMN is bound by residues Ser-106 and Gln-127. Tyr-129 contributes to the substrate binding site. Thr-155 is a binding site for FMN. Arg-164 is a binding site for substrate. Lys-251 contacts FMN. The Proton acceptor role is filled by His-275. Arg-278 lines the substrate pocket. Residue 306–330 (DSGIRNGLDVVRMIALGADTVLLGR) participates in FMN binding.

It belongs to the FMN-dependent alpha-hydroxy acid dehydrogenase family. Requires FMN as cofactor.

Its subcellular location is the cell inner membrane. It carries out the reaction (S)-lactate + A = pyruvate + AH2. Functionally, catalyzes the conversion of L-lactate to pyruvate. Is coupled to the respiratory chain. This is L-lactate dehydrogenase from Salmonella paratyphi A (strain ATCC 9150 / SARB42).